Reading from the N-terminus, the 137-residue chain is Large-conductance mechanosensitive channel (137 aa).

A run of 2 helical transmembrane segments spans residues 9 to 29 and 79 to 99; these read AFAVKGNVVDMAVGIIIGAAF and IQTILDFIIVAFAIFMGVKVI.

The protein belongs to the MscL family. Homopentamer.

It is found in the cell inner membrane. In terms of biological role, channel that opens in response to stretch forces in the membrane lipid bilayer. May participate in the regulation of osmotic pressure changes within the cell. This Pseudomonas entomophila (strain L48) protein is Large-conductance mechanosensitive channel.